Reading from the N-terminus, the 452-residue chain is Diphthine methyltransferase (452 aa).

WD repeat units lie at residues 79 to 130, 131 to 185, 186 to 229, 230 to 273, 274 to 313, 314 to 403, and 404 to 448; these read PLVE…SHVL, EPLS…RPRL, QKVA…RVPG, KFLF…RNMK, QPLA…LNCQ, KAME…TEGM, and RKNG…HLWE. Ser-353 bears the Phosphoserine mark. The segment at 371 to 402 is disordered; it reads SELPTPCHECREDNDGEGHARPQSGMKPLTEG. Over residues 378 to 390 the composition is skewed to basic and acidic residues; sequence HECREDNDGEGHA.

The protein belongs to the DPH7 family. In terms of assembly, interacts with INCA1.

The enzyme catalyses diphthine methyl ester-[translation elongation factor 2] + H2O = diphthine-[translation elongation factor 2] + methanol + H(+). Its pathway is protein modification; peptidyl-diphthamide biosynthesis. Its function is as follows. Catalyzes the demethylation of diphthine methyl ester to form diphthine, an intermediate diphthamide biosynthesis, a post-translational modification of histidine which occurs in translation elongation factor 2 (EEF2) which can be ADP-ribosylated by diphtheria toxin and by Pseudomonas exotoxin A (Eta). This Homo sapiens (Human) protein is Diphthine methyltransferase (DPH7).